Reading from the N-terminus, the 363-residue chain is Early boundary activity protein 1 (363 aa).

Positions 155–168 (MDQEPEHKQSHEQD) are enriched in basic and acidic residues. The interval 155–242 (MDQEPEHKQS…NAKRRCPGFE (88 aa)) is disordered. Positions 198–209 (EDLGLDDDDEDY) are enriched in acidic residues. A BEN domain is found at 255–354 (GPNGTEVSRI…TKCADENKML (100 aa)).

The heterotrimeric Elba complex consists of Elba1, Elba2 and Elba3.

The protein resides in the nucleus. Its function is as follows. The heterotrimeric Elba complex is required for chromatin domain boundary function during early embryogenesis. It binds to a 8-bp sequence 5'-CCAATAAG-3' in the Fab-7 insulator or boundary element in the bithorax complex and contributes to its insulator or boundary activity. Elba1 may act as a transcriptional repressor and binds the palindromic sequence 5'-CCAATTGG-3' to mediate transcriptional repression. The sequence is that of Early boundary activity protein 1 from Drosophila melanogaster (Fruit fly).